The following is a 1405-amino-acid chain: Tonsoku-like protein (1405 aa).

TPR repeat units follow at residues Ala23–Met56, Ala63–Leu96, Ala163–His196, His203–Phe237, Cys245–Asp278, Lys314–Asn347, and Val355–Ala388. One copy of the LRR 1 repeat lies at Ile153–Glu181. Residues Met439–Lys465 form an LRR 2 repeat. Positions Lys465–Lys535 are disordered. The span at Leu469 to Asp483 shows a compositional bias: acidic residues. ANK repeat units follow at residues Lys538–Val567, Ala571–Ile600, and Asp609–Val638. Disordered stretches follow at residues Phe695–Arg753, Lys806–Leu827, and Thr841–Gln880. A phosphoserine mark is found at Ser707 and Ser709. Over residues Leu813–Phe822 the composition is skewed to basic and acidic residues. The span at Thr841–Gln850 shows a compositional bias: polar residues. The segment covering Ser859–Ser874 has biased composition (low complexity). Ser893, Ser895, Ser899, and Ser902 each carry phosphoserine. LRR repeat units lie at residues Gln1085–Lys1108, Leu1113–Gly1137, Leu1143–Lys1166, Leu1186–Gln1211, Ala1287–Asp1311, and Leu1333–Met1357.

This sequence belongs to the Tonsoku family.

The protein resides in the nucleus. Its subcellular location is the nucleoplasm. It localises to the chromosome. Histone reader involved in homologous recombination-mediated repair of double-strand breaks (DSBs) at stalled or collapsed replication forks. Specifically recognizes and binds histone H3.1. The chain is Tonsoku-like protein from Drosophila melanogaster (Fruit fly).